The primary structure comprises 130 residues: MAITQNYGTGRRKSSTARVFLRKGSGNITVNGRPLDEFFGRETARMIVRQPLELTKNTESFDILVTAAGGGTTGQAGAIRLGIARALVEYDETLKSELRKAGFMTRDAREVERKKVGLHKARRATQFSKR.

It belongs to the universal ribosomal protein uS9 family.

This is Small ribosomal subunit protein uS9 from Stenotrophomonas maltophilia (strain R551-3).